The sequence spans 468 residues: ATP synthase subunit beta (468 aa).

Residue 156-163 (GGAGVGKT) participates in ATP binding.

It belongs to the ATPase alpha/beta chains family. F-type ATPases have 2 components, CF(1) - the catalytic core - and CF(0) - the membrane proton channel. CF(1) has five subunits: alpha(3), beta(3), gamma(1), delta(1), epsilon(1). CF(0) has three main subunits: a(1), b(2) and c(9-12). The alpha and beta chains form an alternating ring which encloses part of the gamma chain. CF(1) is attached to CF(0) by a central stalk formed by the gamma and epsilon chains, while a peripheral stalk is formed by the delta and b chains.

It is found in the cell inner membrane. It catalyses the reaction ATP + H2O + 4 H(+)(in) = ADP + phosphate + 5 H(+)(out). Produces ATP from ADP in the presence of a proton gradient across the membrane. The catalytic sites are hosted primarily by the beta subunits. The protein is ATP synthase subunit beta of Sulfurimonas denitrificans (strain ATCC 33889 / DSM 1251) (Thiomicrospira denitrificans (strain ATCC 33889 / DSM 1251)).